The following is a 587-amino-acid chain: Aspartate--tRNA ligase (587 aa).

An L-aspartate-binding site is contributed by Glu174. The segment at 198–201 (QITK) is aspartate. Residue Arg220 coordinates L-aspartate. ATP-binding positions include 220–222 (RDE) and Gln229. His443 is an L-aspartate binding site. Residue Glu477 participates in ATP binding. Residue Arg484 coordinates L-aspartate. 529-532 (GLDR) provides a ligand contact to ATP.

The protein belongs to the class-II aminoacyl-tRNA synthetase family. Type 1 subfamily. In terms of assembly, homodimer.

Its subcellular location is the cytoplasm. It carries out the reaction tRNA(Asp) + L-aspartate + ATP = L-aspartyl-tRNA(Asp) + AMP + diphosphate. In terms of biological role, catalyzes the attachment of L-aspartate to tRNA(Asp) in a two-step reaction: L-aspartate is first activated by ATP to form Asp-AMP and then transferred to the acceptor end of tRNA(Asp). This is Aspartate--tRNA ligase from Streptococcus pneumoniae (strain Taiwan19F-14).